Consider the following 216-residue polypeptide: Transmembrane emp24 domain-containing protein eca (216 aa).

Positions 1-20 are cleaved as a signal peptide; it reads MRNQFICVALLLCALNSACG. Residues 21-183 are Lumenal-facing; that stretch reads LYFHISETER…RHTSESTNSR (163 aa). The GOLD domain occupies 30–126; the sequence is RKCFIEEVPD…QLRVHLDIQV (97 aa). Residues 134 to 164 adopt a coiled-coil conformation; the sequence is ANVAQKEKLTELQLRIRQLLDQVDQITKEQN. The chain crosses the membrane as a helical span at residues 184–203; that stretch reads VLWWSLAQTVVLVCMGFWQM. Residues 204 to 216 are Cytoplasmic-facing; sequence RHLKSFFEAKKLV. The short motif at 213 to 216 is the Prevents secretion from ER element; the sequence is KKLV.

The protein belongs to the EMP24/GP25L family.

The protein resides in the endoplasmic reticulum membrane. In terms of biological role, eca and bai are essential, though not redundant, for dorsoventral patterning of the embryo. Specifically required during early embryogenesis for the activity of maternal tkv, while the zygotic tkv is not affected. Involved in Golgi organization. This is Transmembrane emp24 domain-containing protein eca from Drosophila willistoni (Fruit fly).